A 127-amino-acid polypeptide reads, in one-letter code: Fluoride-specific ion channel FluC (127 aa).

4 consecutive transmembrane segments (helical) span residues 4-24, 39-59, 68-88, and 102-122; these read LDYL…YLVS, GTII…FAAI, AILF…TFTY, and VAYA…GMIL. Gly78 and Thr81 together coordinate Na(+).

This sequence belongs to the fluoride channel Fluc/FEX (TC 1.A.43) family.

The protein localises to the cell inner membrane. It catalyses the reaction fluoride(in) = fluoride(out). With respect to regulation, na(+) is not transported, but it plays an essential structural role and its presence is essential for fluoride channel function. Functionally, fluoride-specific ion channel. Important for reducing fluoride concentration in the cell, thus reducing its toxicity. This is Fluoride-specific ion channel FluC from Thermotoga petrophila (strain ATCC BAA-488 / DSM 13995 / JCM 10881 / RKU-1).